The primary structure comprises 621 residues: 1-deoxy-D-xylulose-5-phosphate synthase (621 aa).

Residues histidine 80 and 121–123 (GHS) each bind thiamine diphosphate. Aspartate 152 serves as a coordination point for Mg(2+). Residues 153 to 154 (GA), asparagine 181, tyrosine 288, and glutamate 370 contribute to the thiamine diphosphate site. Asparagine 181 is a Mg(2+) binding site.

This sequence belongs to the transketolase family. DXPS subfamily. As to quaternary structure, homodimer. Mg(2+) serves as cofactor. The cofactor is thiamine diphosphate.

It catalyses the reaction D-glyceraldehyde 3-phosphate + pyruvate + H(+) = 1-deoxy-D-xylulose 5-phosphate + CO2. It functions in the pathway metabolic intermediate biosynthesis; 1-deoxy-D-xylulose 5-phosphate biosynthesis; 1-deoxy-D-xylulose 5-phosphate from D-glyceraldehyde 3-phosphate and pyruvate: step 1/1. Functionally, catalyzes the acyloin condensation reaction between C atoms 2 and 3 of pyruvate and glyceraldehyde 3-phosphate to yield 1-deoxy-D-xylulose-5-phosphate (DXP). The protein is 1-deoxy-D-xylulose-5-phosphate synthase of Vibrio parahaemolyticus serotype O3:K6 (strain RIMD 2210633).